A 284-amino-acid polypeptide reads, in one-letter code: Tropomyosin-1 (284 aa).

2 disordered regions span residues 1 to 26 and 96 to 124; these read MDAI…DTCE and EEDL…DENN. Residues 1-276 are a coiled coil; that stretch reads MDAIKKKMQA…YKSLADEMDS (276 aa). Residues 12-26 show a composition bias toward basic and acidic residues; that stretch reads KLEKDNAMDKADTCE. Positions 107–121 are enriched in polar residues; that stretch reads GTAQQKLLEAQQSAD.

Belongs to the tropomyosin family. In terms of assembly, homodimer.

Tropomyosin, in association with the troponin complex, plays a central role in the calcium dependent regulation of muscle contraction. The sequence is that of Tropomyosin-1 from Bombyx mori (Silk moth).